The chain runs to 627 residues: Altered inheritance of mitochondria protein 9, mitochondrial (627 aa).

Residues 1–43 (MIRYTVAGHSRRCVVGASKRVGAIKCITVAATKRFISNKPNEV) constitute a mitochondrion transit peptide.

It belongs to the AIM9 family.

The protein resides in the mitochondrion. This Saccharomyces cerevisiae (strain ATCC 204508 / S288c) (Baker's yeast) protein is Altered inheritance of mitochondria protein 9, mitochondrial (AIM9).